We begin with the raw amino-acid sequence, 346 residues long: MIKVGVVGATGYAGAELVRLLSRHPKVELTMLTSQTYAGKPMWEVFPHLYGIVDNTLEELNIPKLVANCDVIFTALPHGHAMPIAQEVMKKSKRLIDLGADFRLKDVNIYQAWYKTEHTAQLLLNNAVYGLPELYREIIKQSVIVANPGCYPTSVILGLAPLLTNEMVDTKTLIIDAKSGVSGAGRGLSLKTHFSETTNNFQAYGVATHRHTPEIEQELALLAGNPVTVSFTPHLTPMIRGILSTIYASLINNVTTEELTAIYRQFYQGERFVRVLPAGMYPTTKGVAGSNHCDISVTVDVRTKRVIVLSAIDNLIKGAAGQAVQNLNVMLGLPEDTALDFAGIYP.

Cys-150 is a catalytic residue.

This sequence belongs to the NAGSA dehydrogenase family. Type 1 subfamily.

The protein resides in the cytoplasm. The catalysed reaction is N-acetyl-L-glutamate 5-semialdehyde + phosphate + NADP(+) = N-acetyl-L-glutamyl 5-phosphate + NADPH + H(+). The protein operates within amino-acid biosynthesis; L-arginine biosynthesis; N(2)-acetyl-L-ornithine from L-glutamate: step 3/4. In terms of biological role, catalyzes the NADPH-dependent reduction of N-acetyl-5-glutamyl phosphate to yield N-acetyl-L-glutamate 5-semialdehyde. The polypeptide is N-acetyl-gamma-glutamyl-phosphate reductase (Desulforamulus reducens (strain ATCC BAA-1160 / DSM 100696 / MI-1) (Desulfotomaculum reducens)).